Consider the following 121-residue polypeptide: uncharacterized protein (121 aa).

Transmembrane regions (helical) follow at residues V2–I22, F42–F62, and I89–F109.

It localises to the membrane. This is an uncharacterized protein from Saccharomyces cerevisiae (strain ATCC 204508 / S288c) (Baker's yeast).